A 498-amino-acid polypeptide reads, in one-letter code: WD repeat-containing protein 55 homolog (498 aa).

The segment at 1–131 (MHTHNNFKTP…ATFDLDEDDE (131 aa)) is disordered. Acidic residues-rich tracts occupy residues 12 to 23 (DEDELDDLDEDM) and 31 to 48 (IEQEVLNESDSDNDEYDL). WD repeat units follow at residues 154–193 (KLEDFITDICFHPDRDIIALATIIGDVHLYEYDNEANKLL), 198–237 (VHSKACRDVEFTEDGRFLLTCSKDKCVMVTDMETEKLKKL), 241–279 (AHDDAINTLHVLNENLFASGDDAGTVKLWDLRTKNAIFE), 282–321 (ELEDQITQLTTNEQSKLLLATSADGYLTTFNISARKMYVQ), 324–363 (PYEEELNCMGVYRGDSKLVVGTSKGRLYTYNWGQFGYHCD), and 408–447 (QHNMPIESLDVNASGELIASSSHNNDVRFWNVKYFEDFGE).

Belongs to the WD repeat WDR55 family.

This Drosophila simulans (Fruit fly) protein is WD repeat-containing protein 55 homolog.